The sequence spans 557 residues: uncharacterized protein (557 aa).

The region spanning 7 to 206 (SSFIDMLRLG…FACFLEGMLS (200 aa)) is the DhaL domain.

This is an uncharacterized protein from Mycoplasma genitalium (strain ATCC 33530 / DSM 19775 / NCTC 10195 / G37) (Mycoplasmoides genitalium).